Reading from the N-terminus, the 309-residue chain is Ras-like protein 1 (309 aa).

Residues 20 to 25, 36 to 42, 66 to 67, 123 to 126, and 153 to 155 each bind GTP; these read GVGKSA, VDEYDPT, AG, NKLD, and SAK. An Effector region motif is present at residues 39–47; that stretch reads YDPTIEDSY. The tract at residues 177–303 is disordered; the sequence is KYNSMNRQLD…SANARKESSG (127 aa). Composition is skewed to polar residues over residues 179–188 and 209–235; these read NSMNRQLDNT and NGSY…NHNG. Residues 236 to 245 show a composition bias toward basic and acidic residues; it reads ETTKRTDEKN. Over residues 246–256 the composition is skewed to low complexity; sequence YVNQNNNNEGN. The segment covering 257–296 has biased composition (polar residues); it reads TKYSSNGNGNRSDISRGNQNNALNSRSKQSAEPQKNSSAN. Cys-305 carries S-palmitoyl cysteine lipidation. Residue Cys-306 is modified to Cysteine methyl ester. A lipid anchor (S-farnesyl cysteine) is attached at Cys-306. The propeptide at 307–309 is removed in mature form; sequence IIC.

Belongs to the small GTPase superfamily. Ras family. Farnesylated by RAM1-RAM2, which is required for targeting RAS1 to the cytoplasmic site of the endoplasmic reticulum, where proteolytic processing of the C-terminus by RCE1 and methylation of the resulting carboxyl group by STE14 occurs. Post-translationally, palmitoylated by the ERF2-SHR5 complex, which is required for proper plasma membrane localization of RAS1.

It localises to the cell membrane. It carries out the reaction GTP + H2O = GDP + phosphate + H(+). Alternates between an inactive form bound to GDP and an active form bound to GTP. Activated by guanine nucleotide-exchange factor (GEF) CDC25 and inactivated by GTPase-activating proteins (GAPs) IRA1 and IRA2. Functionally, the S.cerevisiae Ras proteins modulate the activity of the adenylate cyclase catalytic subunit and therefore affect the biosynthesis of cyclic-AMP. The sequence is that of Ras-like protein 1 (RAS1) from Saccharomyces cerevisiae (strain ATCC 204508 / S288c) (Baker's yeast).